Here is a 1465-residue protein sequence, read N- to C-terminus: Neuropathy target esterase sws (1465 aa).

Residues 1–34 lie on the Lumenal side of the membrane; it reads MDVLEMLRASASGSYNTIFSEAWCQYVSKQITAT. Residues 35–55 form a helical membrane-spanning segment; sequence MYMYCALGMMGVLFLAWFMYF. The Cytoplasmic segment spans residues 56–1465; it reads KRMARLRLRD…RSSANNETKN (1410 aa). 174 to 301 contacts a nucleoside 3',5'-cyclic phosphate; that stretch reads IFGHFEKPVF…IRVIQVIMIR (128 aa). Composition is skewed to polar residues over residues 331 to 349 and 434 to 454; these read STMS…RQTP and QQSV…TPDG. 2 disordered regions span residues 331–421 and 434–460; these read STMS…TEVH and QQSV…SCPP. Phosphoserine is present on residues S446 and S455. Residues 484-611 and 600-727 contribute to the a nucleoside 3',5'-cyclic phosphate site; these read ELGL…VVRR and IVLD…LSHR. The region spanning 954-1120 is the PNPLA domain; sequence LVLGGGGARG…VNNLPGHLWR (167 aa). Residues 958–963 carry the GXGXXG motif; sequence GGGARG. The GXSXG motif lies at 985–989; the sequence is GVSIG. The Nucleophile role is filled by S987. D1107 functions as the Proton acceptor in the catalytic mechanism. Positions 1107–1109 match the DGA/G motif; the sequence is DGG. The residue at position 1201 (S1201) is a Phosphoserine. Positions 1371–1465 are disordered; the sequence is LERKTDKSTQ…RSSANNETKN (95 aa). Over residues 1378–1390 the composition is skewed to low complexity; the sequence is STQSSPPTSSRTS. The span at 1392-1402 shows a compositional bias: basic and acidic residues; that stretch reads RGKEEARHMDN. A compositionally biased stretch (polar residues) spans 1413-1424; that stretch reads TGSGATEGIHTS. The span at 1447–1456 shows a compositional bias: basic and acidic residues; the sequence is VYKDEDKENR.

This sequence belongs to the NTE family. In terms of assembly, interacts with Pka-C3; interaction inhibits the catalytic function of Pka-C3 and the esterase activity of sws.

It is found in the endoplasmic reticulum membrane. It carries out the reaction a 1-acyl-sn-glycero-3-phosphocholine + H2O = sn-glycerol 3-phosphocholine + a fatty acid + H(+). Its function is as follows. Phospholipase B that deacylates intracellular phosphatidylcholine (PtdCho), generating glycerophosphocholine (GroPtdCho). This deacylation occurs at both sn-2 and sn-1 positions of PtdCho. Its specific chemical modification by certain organophosphorus (OP) compounds leads to distal axonopathy. Plays a role in the signaling mechanism between neurons and glia that regulates glia wrapping during development of the adult brain. Essential for membrane lipid homeostasis and cell survival in both neurons and glia of the adult brain. This chain is Neuropathy target esterase sws, found in Drosophila erecta (Fruit fly).